We begin with the raw amino-acid sequence, 176 residues long: Nucleoside triphosphate/diphosphate phosphatase (176 aa).

Arginine 23 serves as the catalytic Proton donor. Residues asparagine 87, aspartate 103, aspartate 105, aspartate 107, aspartate 120, and glutamate 123 each coordinate Mg(2+).

Belongs to the Ntdp family. Requires Mg(2+) as cofactor.

The catalysed reaction is a ribonucleoside 5'-triphosphate + H2O = a ribonucleoside 5'-diphosphate + phosphate + H(+). It carries out the reaction a ribonucleoside 5'-diphosphate + H2O = a ribonucleoside 5'-phosphate + phosphate + H(+). In terms of biological role, has nucleoside phosphatase activity towards nucleoside triphosphates and nucleoside diphosphates. This is Nucleoside triphosphate/diphosphate phosphatase from Bacillus mycoides (strain KBAB4) (Bacillus weihenstephanensis).